Here is a 136-residue protein sequence, read N- to C-terminus: Cell division protein SepF 3 (136 aa).

The protein belongs to the SepF family. In terms of assembly, homodimer. Interacts with FtsZ.

The protein localises to the cytoplasm. Functionally, cell division protein that is part of the divisome complex and is recruited early to the Z-ring. Probably stimulates Z-ring formation, perhaps through the cross-linking of FtsZ protofilaments. Its function overlaps with FtsA. The polypeptide is Cell division protein SepF 3 (Streptomyces coelicolor (strain ATCC BAA-471 / A3(2) / M145)).